A 417-amino-acid polypeptide reads, in one-letter code: RH-like protein IIF (417 aa).

Transmembrane regions (helical) follow at residues 12-32 (CLPLCALTLEAALILLFYFFT), 44-64 (LVASYQVGQDLTVMAAIGFGF), 77-97 (VAFNLFMLALGVQWAILLDGF), 125-145 (ISAGAVLGYVNLVQLVVMVLV), 172-192 (FYLFTAYFGVTVAWCLPKPLP), 203-223 (TIPSLSAMLGALFLWMFWPSF), 238-258 (VFNTYYALAVSVVTAISGSSL), 265-285 (ISMTYVHSAVLAGGVAVGTSC), 287-307 (LIPSPWLAMVLGLVAGLISIG), 331-351 (NFSLLGLLGEIIYIVLVVRHT), and 358-378 (MIGFQVLLSMGELSLAIAIAL).

The protein belongs to the ammonium transporter (TC 2.A.49) family. Rh subfamily.

It is found in the membrane. In terms of biological role, may be part of an oligomeric complex which is likely to have a transport or channel function in the erythrocyte membrane. The protein is RH-like protein IIF of Pan troglodytes (Chimpanzee).